The chain runs to 289 residues: Acetyl-coenzyme A carboxylase carboxyl transferase subunit beta (289 aa).

In terms of domain architecture, CoA carboxyltransferase N-terminal spans 34-289; sequence MWVKCNKCGE…KLINMHKNSF (256 aa). 4 residues coordinate Zn(2+): Cys38, Cys41, Cys57, and Cys60. Residues 38–60 form a C4-type zinc finger; sequence CNKCGEILYQNDLEKNYMACNLC.

The protein belongs to the AccD/PCCB family. Acetyl-CoA carboxylase is a heterohexamer composed of biotin carboxyl carrier protein (AccB), biotin carboxylase (AccC) and two subunits each of ACCase subunit alpha (AccA) and ACCase subunit beta (AccD). The cofactor is Zn(2+).

Its subcellular location is the cytoplasm. It carries out the reaction N(6)-carboxybiotinyl-L-lysyl-[protein] + acetyl-CoA = N(6)-biotinyl-L-lysyl-[protein] + malonyl-CoA. Its pathway is lipid metabolism; malonyl-CoA biosynthesis; malonyl-CoA from acetyl-CoA: step 1/1. Its function is as follows. Component of the acetyl coenzyme A carboxylase (ACC) complex. Biotin carboxylase (BC) catalyzes the carboxylation of biotin on its carrier protein (BCCP) and then the CO(2) group is transferred by the transcarboxylase to acetyl-CoA to form malonyl-CoA. This chain is Acetyl-coenzyme A carboxylase carboxyl transferase subunit beta, found in Clostridium botulinum (strain Loch Maree / Type A3).